An 854-amino-acid polypeptide reads, in one-letter code: Leucine--tRNA ligase (854 aa).

Residues 1–32 (MARRDMAAETMDPRASTEPSPNEPREPARYDH) are disordered. A compositionally biased stretch (basic and acidic residues) spans 23–32 (EPREPARYDH). The 'HIGH' region signature appears at 69–80 (PYPSGSGLHVGH). A 'KMSKS' region motif is present at residues 633–637 (KMSKS). Lys636 is an ATP binding site.

It belongs to the class-I aminoacyl-tRNA synthetase family.

The protein localises to the cytoplasm. The enzyme catalyses tRNA(Leu) + L-leucine + ATP = L-leucyl-tRNA(Leu) + AMP + diphosphate. The polypeptide is Leucine--tRNA ligase (Sorangium cellulosum (strain So ce56) (Polyangium cellulosum (strain So ce56))).